A 550-amino-acid polypeptide reads, in one-letter code: CTP synthase (550 aa).

An amidoligase domain region spans residues 1–277 (MNGSADAGPR…GRAVERALGL (277 aa)). Residue Ser-23 coordinates CTP. Residue Ser-23 participates in UTP binding. Residue 24–29 (SLGKGI) participates in ATP binding. Tyr-64 contributes to the L-glutamine binding site. Asp-81 is a binding site for ATP. 2 residues coordinate Mg(2+): Asp-81 and Glu-151. CTP-binding positions include 158 to 160 (DIE), 198 to 203 (KTKPTQ), and Lys-234. UTP-binding positions include 198–203 (KTKPTQ) and Lys-234. Residue Val-252 participates in ATP binding. The Glutamine amidotransferase type-1 domain occupies 302–549 (KIAIAGKYVK…VEAALAYQER (248 aa)). Residue Gly-364 coordinates L-glutamine. Cys-391 serves as the catalytic Nucleophile; for glutamine hydrolysis. Residues 392 to 395 (LGLQ), Glu-415, and Arg-472 contribute to the L-glutamine site. Residues His-522 and Glu-524 contribute to the active site.

The protein belongs to the CTP synthase family. As to quaternary structure, homotetramer in the presence of UTP and ATP. Is in a protein concentration-dependent equilibrium between monomer, dimer, and tetramer in the absence of UTP and ATP.

The catalysed reaction is UTP + L-glutamine + ATP + H2O = CTP + L-glutamate + ADP + phosphate + 2 H(+). It carries out the reaction L-glutamine + H2O = L-glutamate + NH4(+). It catalyses the reaction UTP + NH4(+) + ATP = CTP + ADP + phosphate + 2 H(+). It participates in pyrimidine metabolism; CTP biosynthesis via de novo pathway; CTP from UDP: step 2/2. With respect to regulation, allosterically activated by GTP, when glutamine is the substrate. GTP has no effect on the reaction when ammonia is the substrate. The allosteric effector GTP functions by stabilizing the protein conformation that binds the tetrahedral intermediate(s) formed during glutamine hydrolysis. Inhibited by the product CTP, via allosteric rather than competitive inhibition. Catalyzes the ATP-dependent amination of UTP to CTP with either L-glutamine or ammonia as the source of nitrogen. Regulates intracellular CTP levels through interactions with the four ribonucleotide triphosphates. This chain is CTP synthase, found in Thermus thermophilus (strain ATCC 27634 / DSM 579 / HB8).